Here is a 248-residue protein sequence, read N- to C-terminus: NH(3)-dependent NAD(+) synthetase (248 aa).

Position 31-38 (31-38 (GVSGGVDS)) interacts with ATP. Residue Asp-37 participates in Mg(2+) binding. Arg-114 is a deamido-NAD(+) binding site. Residue Thr-134 coordinates ATP. A Mg(2+)-binding site is contributed by Glu-139. Residues Lys-147 and Asp-154 each contribute to the deamido-NAD(+) site. Residues Lys-163 and Ser-185 each coordinate ATP. 236–237 (HK) is a deamido-NAD(+) binding site.

Belongs to the NAD synthetase family. As to quaternary structure, homodimer.

It catalyses the reaction deamido-NAD(+) + NH4(+) + ATP = AMP + diphosphate + NAD(+) + H(+). It functions in the pathway cofactor biosynthesis; NAD(+) biosynthesis; NAD(+) from deamido-NAD(+) (ammonia route): step 1/1. In terms of biological role, catalyzes the ATP-dependent amidation of deamido-NAD to form NAD. Uses ammonia as a nitrogen source. In Methanoregula boonei (strain DSM 21154 / JCM 14090 / 6A8), this protein is NH(3)-dependent NAD(+) synthetase.